The sequence spans 159 residues: Small ribosomal subunit protein uS17 (159 aa).

The protein belongs to the universal ribosomal protein uS17 family.

This Euphorbia esula (Leafy spurge) protein is Small ribosomal subunit protein uS17 (RPS11).